Reading from the N-terminus, the 267-residue chain is PF03932 family protein CutC (267 aa).

This sequence belongs to the CutC family.

It localises to the cytoplasm. The protein is PF03932 family protein CutC of Xylella fastidiosa (strain 9a5c).